The primary structure comprises 235 residues: Ribosomal RNA small subunit methyltransferase G (235 aa).

S-adenosyl-L-methionine-binding positions include G75, F80, 126–127 (AE), and R145.

This sequence belongs to the methyltransferase superfamily. RNA methyltransferase RsmG family.

It localises to the cytoplasm. Specifically methylates the N7 position of a guanine in 16S rRNA. This chain is Ribosomal RNA small subunit methyltransferase G, found in Carboxydothermus hydrogenoformans (strain ATCC BAA-161 / DSM 6008 / Z-2901).